Reading from the N-terminus, the 455-residue chain is Probable glycine dehydrogenase (decarboxylating) subunit 1 (455 aa).

It belongs to the GcvP family. N-terminal subunit subfamily. The glycine cleavage system is composed of four proteins: P, T, L and H. In this organism, the P 'protein' is a heterodimer of two subunits.

It carries out the reaction N(6)-[(R)-lipoyl]-L-lysyl-[glycine-cleavage complex H protein] + glycine + H(+) = N(6)-[(R)-S(8)-aminomethyldihydrolipoyl]-L-lysyl-[glycine-cleavage complex H protein] + CO2. In terms of biological role, the glycine cleavage system catalyzes the degradation of glycine. The P protein binds the alpha-amino group of glycine through its pyridoxal phosphate cofactor; CO(2) is released and the remaining methylamine moiety is then transferred to the lipoamide cofactor of the H protein. This Saccharolobus solfataricus (strain ATCC 35092 / DSM 1617 / JCM 11322 / P2) (Sulfolobus solfataricus) protein is Probable glycine dehydrogenase (decarboxylating) subunit 1.